A 376-amino-acid polypeptide reads, in one-letter code: 12-oxophytodienoate reductase 1 (376 aa).

Residues 35 to 37 (PLT), alanine 68, and glutamine 110 each bind FMN. Residues serine 143 and 187–190 (HGAH) contribute to the substrate site. Tyrosine 192 (proton donor) is an active-site residue. Position 239 (arginine 239) interacts with FMN. Arginine 279 lines the substrate pocket. FMN-binding positions include glycine 309 and 330–331 (GR).

The protein belongs to the NADH:flavin oxidoreductase/NADH oxidase family. Requires FMN as cofactor. In terms of tissue distribution, constitutively expressed in roots, leaves, cotyledons, cells culture and to a lower extent in flowers.

The protein localises to the cytoplasm. The enzyme catalyses (1S,2S)-OPC-8 + NADP(+) = (9S,13S,15Z)-12-oxophyto-10,15-dienoate + NADPH + H(+). Its pathway is lipid metabolism; oxylipin biosynthesis. Its function is as follows. Specifically cleaves olefinic bonds in alpha,beta-unsaturated carbonyls and may be involved in detoxification or modification of these reactive compounds. May be involved in the biosynthesis or metabolism of oxylipin signaling molecules. In vitro, reduces 9R,13R-12-oxophyodienoic acid (9R,13R-OPDA) to 9R,13R-OPC-8:0, but not 9S,13S-OPDA, the natural precursor of jasmonic acid. Also reduces N-ethylmaleimide and maleic acid. This chain is 12-oxophytodienoate reductase 1 (OPR1), found in Solanum lycopersicum (Tomato).